A 267-amino-acid polypeptide reads, in one-letter code: Pre-protein VI (267 aa).

Residues 1-33 (MEDINFASLAPRHGSRPFMGTWNEIGTSQLNGG) constitute a propeptide that is removed on maturation. The amphipathic alpha-helix essential for membrane lytic activity stretch occupies residues 34–54 (AFSWSSLWSGIKNFGSSIKSF). Residues 36-53 (SWSSLWSGIKNFGSSIKS) are involved in endosomal membrane lysis. Positions 48-74 (GSSIKSFGNKAWNSNTGQMLRDKLKDQ) are interaction with hexon protein. The Nuclear export signal signature appears at 67–76 (LRDKLKDQNF). Disordered stretches follow at residues 107–184 (LENS…PMTK) and 199–230 (KPVT…PTAP). 2 stretches are compositionally biased toward basic and acidic residues: residues 123–135 (PKVE…EKLP) and 146–155 (KGEKRPRPDL). The Nuclear localization signal motif lies at 149–153 (KRPRP). A PPXY motif motif is present at residues 166–169 (PPSY). Over residues 205–217 (LPPPVPTVPPMPA) the composition is skewed to pro residues. Positions 218–230 (PTLGTAVSRPTAP) are enriched in low complexity. Positions 248-259 (STLNSIVGLGVK) match the Nuclear export signal motif. Residues 250–256 (LNSIVGL) are interaction with hexon protein. Residues 257 to 267 (GVKSLKRRRCY) are binds to importin alpha/beta, involved in hexon nuclear import. The Nuclear localization signal signature appears at 262–265 (KRRR).

The protein belongs to the adenoviridae protein VI family. As to quaternary structure, interacts with hexon protein; this interaction allows nuclear import of hexon trimers and possibly pre-capsid assembly. Interacts (via C-terminal NLS) with importin alpha/beta. Interacts (via PPxY motif) with host NEDD4 ubiquitine ligase; this interaction might play a role in virus intracellular transport during entry. Part of a complex composed of the core-capsid bridging protein, the endosome lysis protein VI and the hexon-linking protein VIII; these interactions bridge the virus core to the capsid. Interacts with peripentonal hexons; this interaction stabilizes the capsid by gluing two peripentonal hexons together and joining them with an adjacent group-of-nine hexon. In terms of assembly, heterodimer with the viral protease; disulfide-linked. Interacts with the viral protease. Post-translationally, ubiquitinated by Nedd4 following partial capsid disassembly; which might play a role in intracellular virus movement during entry. In terms of processing, contains the major nuclear import and export signals. Proteolytically removed during virion maturation. The processing of the C-terminus turns the precursor into a mature viral structural protein and abrogates its ability to promote hexon import and act as a potential chaperone protein.

Its subcellular location is the host nucleus. The protein localises to the host cytoplasm. The protein resides in the virion. Functionally, during virus assembly, promotes hexon trimers nuclear import through nuclear pore complexes via an importin alpha/beta-dependent mechanism. By analogy to herpesviruses capsid assembly, might act as a chaperone to promote the formation of the icosahedral capsid. Its function is as follows. Structural component of the virion that provides increased stability to the particle shell through its interaction with the core-capsid bridging protein and the hexon-linking protein VIII. Fibers shedding during virus entry into host cell allows the endosome lysis protein to be exposed as a membrane-lytic peptide. Exhibits pH-independent membrane fragmentation activity and probably mediates viral rapid escape from host endosome via organellar membrane lysis. It is not clear if it then remains partially associated with the capsid and involved in the intracellular microtubule-dependent transport of capsid to the nucleus, or if it is lost during endosomal penetration. Cofactor that activates the viral protease. Binds to viral protease in a 1:1 ratio. This chain is Pre-protein VI, found in Homo sapiens (Human).